A 444-amino-acid chain; its full sequence is Chromosome partition protein MukF (444 aa).

The segment at 212-240 (LDETSGNLRELQDTLNAAGDKLQAQLLRI) is leucine-zipper.

The protein belongs to the MukF family. Interacts, and probably forms a ternary complex, with MukE and MukB via its C-terminal region. The complex formation is stimulated by calcium or magnesium. It is required for an interaction between MukE and MukB.

The protein localises to the cytoplasm. It localises to the nucleoid. Involved in chromosome condensation, segregation and cell cycle progression. May participate in facilitating chromosome segregation by condensation DNA from both sides of a centrally located replisome during cell division. Not required for mini-F plasmid partitioning. Probably acts via its interaction with MukB and MukE. Overexpression results in anucleate cells. It has a calcium binding activity. In Haemophilus influenzae (strain PittEE), this protein is Chromosome partition protein MukF.